The following is a 561-amino-acid chain: Putative transport protein YbjL (561 aa).

5 helical membrane passes run 8–28, 32–52, 66–86, 94–114, and 158–178; these read LLNG…LCLG, LGSV…LLGQ, FMLF…SIFF, MLAL…GKLF, and NLSL…IVGA. RCK C-terminal domains follow at residues 200–288 and 292–373; these read RGLD…SFRN and VFDR…RIGF. Helical transmembrane passes span 383-403, 406-426, 447-467, 475-495, and 540-560; these read LLAF…TFQF, FSFG…LGFL, FGLM…INNG, MLIA…LFGA, and AIAN…WPGL.

This sequence belongs to the AAE transporter (TC 2.A.81) family. YbjL subfamily.

Its subcellular location is the cell membrane. The protein is Putative transport protein YbjL of Salmonella paratyphi C (strain RKS4594).